The sequence spans 176 residues: Flavodoxin (176 aa).

One can recognise a Flavodoxin-like domain in the interval 4–172; sequence IGIFFGTDTG…RLASWLEEIK (169 aa).

This sequence belongs to the flavodoxin family. The cofactor is FMN.

Functionally, low-potential electron donor to a number of redox enzymes. NifF is the electron donor to nitrogenase. This chain is Flavodoxin (nifF), found in Klebsiella pneumoniae.